Here is a 311-residue protein sequence, read N- to C-terminus: 4-hydroxy-tetrahydrodipicolinate synthase (311 aa).

Thr49 lines the pyruvate pocket. The active-site Proton donor/acceptor is the Tyr138. Lys166 functions as the Schiff-base intermediate with substrate in the catalytic mechanism. Residue Val207 coordinates pyruvate.

The protein belongs to the DapA family. As to quaternary structure, homotetramer; dimer of dimers.

The protein resides in the cytoplasm. The catalysed reaction is L-aspartate 4-semialdehyde + pyruvate = (2S,4S)-4-hydroxy-2,3,4,5-tetrahydrodipicolinate + H2O + H(+). The protein operates within amino-acid biosynthesis; L-lysine biosynthesis via DAP pathway; (S)-tetrahydrodipicolinate from L-aspartate: step 3/4. In terms of biological role, catalyzes the condensation of (S)-aspartate-beta-semialdehyde [(S)-ASA] and pyruvate to 4-hydroxy-tetrahydrodipicolinate (HTPA). In Lactobacillus helveticus (strain DPC 4571), this protein is 4-hydroxy-tetrahydrodipicolinate synthase.